We begin with the raw amino-acid sequence, 227 residues long: MRVAGAAKLVVAVAVFLLTFYVISQVFEIKMDASLGNLFARSALDAVVRSTKPPRYKCGISKACPEKHFAFKMASGAANVVGPKICLEDNVLMSGVKNNVGRGINVALVNGKTGELIDTRFFDMWGGNVAPFIEFLKAIQDGTIVLMGTYDDGATKLNDEARRLIAELGSTSITHLGFRDNWVFCGGKGIKTKSPFEQHIKNNKDTNKYEGWPEVVEMEGCIPQKQD.

Positions 1–24 are cleaved as a signal peptide; that stretch reads MRVAGAAKLVVAVAVFLLTFYVIS. 2 disulfides stabilise this stretch: Cys58–Cys86 and Cys64–Cys221. The region spanning 67 to 225 is the GG-type lectin domain; that stretch reads KHFAFKMASG…VEMEGCIPQK (159 aa).

This sequence belongs to the FAM3 family.

It localises to the secreted. It is found in the cytoplasmic vesicle. Its function is as follows. May be involved in retinal laminar formation. Promotes epithelial to mesenchymal transition. The sequence is that of Protein FAM3C (FAM3C) from Bos taurus (Bovine).